The primary structure comprises 1019 residues: Insulin-degrading enzyme (1019 aa).

H108 contributes to the Zn(2+) binding site. Residue E111 is the Proton acceptor of the active site. Zn(2+)-binding residues include H112 and E189. The residue at position 192 (K192) is an N6-succinyllysine. Substrate-binding positions include H336–G342 and L359–Q363. R429 lines the ATP pocket. The residue at position 697 (K697) is an N6-succinyllysine. Residues E853–Y858 carry the SlyX motif motif. Position 895-901 (D895–S901) interacts with ATP.

The protein belongs to the peptidase M16 family. In terms of assembly, homodimer. Can also form homotetramers. (Microbial infection) Interacts (via N-terminus) with varicella-zoster virus (VZV) envelope glycoprotein E (via N-terminus); the membrane-associated isoform may function as an entry receptor for this virus. Zn(2+) is required as a cofactor. In terms of processing, the N-terminus is blocked. In terms of tissue distribution, detected in brain and in cerebrospinal fluid (at protein level).

It localises to the cytoplasm. The protein resides in the cytosol. The protein localises to the cell membrane. It is found in the secreted. The enzyme catalyses Degradation of insulin, glucagon and other polypeptides. No action on proteins.. Its activity is regulated as follows. Activated by small peptides. Activated by ATP and GTP, and to a lesser extent by CTP, TTP and PPPi. Inhibited by bacitracin. In vitro modification of Cys residues impairs enzyme activity. In terms of biological role, plays a role in the cellular breakdown of insulin, APP peptides, IAPP peptides, natriuretic peptides, glucagon, bradykinin, kallidin, and other peptides, and thereby plays a role in intercellular peptide signaling. Substrate binding induces important conformation changes, making it possible to bind and degrade larger substrates, such as insulin. Contributes to the regulation of peptide hormone signaling cascades and regulation of blood glucose homeostasis via its role in the degradation of insulin, glucagon and IAPP. Plays a role in the degradation and clearance of APP-derived amyloidogenic peptides that are secreted by neurons and microglia. Degrades the natriuretic peptides ANP, BNP and CNP, inactivating their ability to raise intracellular cGMP. Also degrades an aberrant frameshifted 40-residue form of NPPA (fsNPPA) which is associated with familial atrial fibrillation in heterozygous patients. Involved in antigen processing. Produces both the N terminus and the C terminus of MAGEA3-derived antigenic peptide (EVDPIGHLY) that is presented to cytotoxic T lymphocytes by MHC class I. Its function is as follows. (Microbial infection) The membrane-associated isoform acts as an entry receptor for varicella-zoster virus (VZV). The sequence is that of Insulin-degrading enzyme from Homo sapiens (Human).